The sequence spans 558 residues: Polypeptide N-acetylgalactosaminyltransferase 16 (558 aa).

Topologically, residues 1–6 (MRKIRA) are cytoplasmic. A helical; Signal-anchor for type II membrane protein membrane pass occupies residues 7–26 (NAIAILTVAWILGTFYYLWQ). Topologically, residues 27–558 (DNRAHAASSG…AQQWQLLPHT (532 aa)) are lumenal. The interval 33–54 (ASSGGRGAQRAGRRSEQLREDR) is disordered. The span at 45–54 (RRSEQLREDR) shows a compositional bias: basic and acidic residues. Cystine bridges form between cysteine 113-cysteine 340, cysteine 331-cysteine 409, cysteine 441-cysteine 460, cysteine 486-cysteine 506, and cysteine 530-cysteine 543. The segment at 122–227 (LPATSVIITF…TEWLPPMLQR (106 aa)) is catalytic subdomain A. Residues aspartate 163 and arginine 188 each coordinate substrate. Mn(2+) is bound at residue aspartate 211. Residue serine 212 coordinates substrate. A Mn(2+)-binding site is contributed by histidine 213. Positions 286–348 (PIRTPVIAGG…PCSRVGHVFR (63 aa)) are catalytic subdomain B. Tryptophan 317 lines the substrate pocket. Residue histidine 345 participates in Mn(2+) binding. The substrate site is built by arginine 348, histidine 351, and tyrosine 353. In terms of domain architecture, Ricin B-type lectin spans 428 to 555 (KEALPGIIKQ…DAQAQQWQLL (128 aa)).

Belongs to the glycosyltransferase 2 family. GalNAc-T subfamily. It depends on Mn(2+) as a cofactor.

It localises to the golgi apparatus membrane. The catalysed reaction is L-seryl-[protein] + UDP-N-acetyl-alpha-D-galactosamine = a 3-O-[N-acetyl-alpha-D-galactosaminyl]-L-seryl-[protein] + UDP + H(+). The enzyme catalyses L-threonyl-[protein] + UDP-N-acetyl-alpha-D-galactosamine = a 3-O-[N-acetyl-alpha-D-galactosaminyl]-L-threonyl-[protein] + UDP + H(+). The protein operates within protein modification; protein glycosylation. In terms of biological role, catalyzes the initial reaction in O-linked oligosaccharide biosynthesis, the transfer of an N-acetyl-D-galactosamine residue to a serine or threonine residue on the protein receptor. The sequence is that of Polypeptide N-acetylgalactosaminyltransferase 16 (GALNT16) from Homo sapiens (Human).